The chain runs to 272 residues: Undecaprenyl-diphosphatase (272 aa).

A run of 8 helical transmembrane segments spans residues 5–25 (YSLF…FLPV), 45–65 (AKTF…VVFW), 88–108 (HLTL…GLAF), 114–134 (ALFD…LLLA), 153–172 (YRQA…PGFS), 189–209 (YAAS…ASGL), 221–241 (GDLP…LIAI), and 251–271 (ISFV…YWVF).

Belongs to the UppP family.

The protein resides in the cell inner membrane. It catalyses the reaction di-trans,octa-cis-undecaprenyl diphosphate + H2O = di-trans,octa-cis-undecaprenyl phosphate + phosphate + H(+). Functionally, catalyzes the dephosphorylation of undecaprenyl diphosphate (UPP). Confers resistance to bacitracin. The chain is Undecaprenyl-diphosphatase from Yersinia pseudotuberculosis serotype IB (strain PB1/+).